A 600-amino-acid chain; its full sequence is Elongation factor 4 (600 aa).

Residues 5–187 (KYIRNFSIIA…AIVNKLHPPK (183 aa)) form the tr-type G domain. GTP contacts are provided by residues 17–22 (DHGKST) and 134–137 (NKID).

The protein belongs to the TRAFAC class translation factor GTPase superfamily. Classic translation factor GTPase family. LepA subfamily.

It localises to the cell inner membrane. The enzyme catalyses GTP + H2O = GDP + phosphate + H(+). Required for accurate and efficient protein synthesis under certain stress conditions. May act as a fidelity factor of the translation reaction, by catalyzing a one-codon backward translocation of tRNAs on improperly translocated ribosomes. Back-translocation proceeds from a post-translocation (POST) complex to a pre-translocation (PRE) complex, thus giving elongation factor G a second chance to translocate the tRNAs correctly. Binds to ribosomes in a GTP-dependent manner. The protein is Elongation factor 4 of Rickettsia akari (strain Hartford).